Consider the following 196-residue polypeptide: Probable peptidyl-prolyl cis-trans isomerase (196 aa).

Residues 1 to 26 form the signal peptide; sequence MSFIRSALAAAAFVALSIGAVQTASA. In terms of domain architecture, PPIase cyclophilin-type spans 29–194; it reads PENTVILKLK…KIIKATIEAD (166 aa).

The protein belongs to the cyclophilin-type PPIase family.

The protein localises to the periplasm. It carries out the reaction [protein]-peptidylproline (omega=180) = [protein]-peptidylproline (omega=0). In terms of biological role, PPIases accelerate the folding of proteins. It catalyzes the cis-trans isomerization of proline imidic peptide bonds in oligopeptides. The protein is Probable peptidyl-prolyl cis-trans isomerase (ppi) of Brucella abortus (strain 2308).